The following is a 512-amino-acid chain: Kynurenine 3-monooxygenase (512 aa).

The protein belongs to the aromatic-ring hydroxylase family. KMO subfamily. The cofactor is FAD.

The protein localises to the mitochondrion outer membrane. The enzyme catalyses L-kynurenine + NADPH + O2 + H(+) = 3-hydroxy-L-kynurenine + NADP(+) + H2O. Its pathway is cofactor biosynthesis; NAD(+) biosynthesis; quinolinate from L-kynurenine: step 1/3. Catalyzes the hydroxylation of L-kynurenine (L-Kyn) to form 3-hydroxy-L-kynurenine (L-3OHKyn). Required for synthesis of quinolinic acid. The protein is Kynurenine 3-monooxygenase (bna4) of Aspergillus clavatus (strain ATCC 1007 / CBS 513.65 / DSM 816 / NCTC 3887 / NRRL 1 / QM 1276 / 107).